A 339-amino-acid polypeptide reads, in one-letter code: ATPase GET3 (339 aa).

ATP is bound at residue 34–41 (KGGVGKTT). D63 is an active-site residue. ATP contacts are provided by E244 and N271. Zn(2+) is bound by residues C282 and C285.

Belongs to the arsA ATPase family. Homodimer.

The protein localises to the cytoplasm. It localises to the endoplasmic reticulum. Its function is as follows. ATPase required for the post-translational delivery of tail-anchored (TA) proteins to the endoplasmic reticulum. Recognizes and selectively binds the transmembrane domain of TA proteins in the cytosol. This complex then targets to the endoplasmic reticulum by membrane-bound receptors, where the tail-anchored protein is released for insertion. This process is regulated by ATP binding and hydrolysis. ATP binding drives the homodimer towards the closed dimer state, facilitating recognition of newly synthesized TA membrane proteins. ATP hydrolysis is required for insertion. Subsequently, the homodimer reverts towards the open dimer state, lowering its affinity for the membrane-bound receptor, and returning it to the cytosol to initiate a new round of targeting. The chain is ATPase GET3 from Podospora anserina (strain S / ATCC MYA-4624 / DSM 980 / FGSC 10383) (Pleurage anserina).